Here is a 293-residue protein sequence, read N- to C-terminus: Ribosomal RNA small subunit methyltransferase H (293 aa).

Residues 32 to 34, Asp-51, Phe-78, Asp-99, and Gln-106 each bind S-adenosyl-L-methionine; that span reads GGH. The segment at 274–293 is disordered; that stretch reads DEIRENPASRSAKMRVARRL.

This sequence belongs to the methyltransferase superfamily. RsmH family.

It is found in the cytoplasm. It catalyses the reaction cytidine(1402) in 16S rRNA + S-adenosyl-L-methionine = N(4)-methylcytidine(1402) in 16S rRNA + S-adenosyl-L-homocysteine + H(+). Specifically methylates the N4 position of cytidine in position 1402 (C1402) of 16S rRNA. The chain is Ribosomal RNA small subunit methyltransferase H from Sulfurihydrogenibium azorense (strain DSM 15241 / OCM 825 / Az-Fu1).